The chain runs to 84 residues: Beta-mammal Tt1g (84 aa).

The first 20 residues, methionine 1 to cysteine 20, serve as a signal peptide directing secretion. Residues lysine 21–glycine 82 form the LCN-type CS-alpha/beta domain. Intrachain disulfides connect cysteine 31–cysteine 81, cysteine 35–cysteine 57, cysteine 43–cysteine 62, and cysteine 47–cysteine 64. Cysteine 81 carries the cysteine amide modification.

Belongs to the long (4 C-C) scorpion toxin superfamily. Sodium channel inhibitor family. Beta subfamily. In terms of tissue distribution, expressed by the venom gland.

It is found in the secreted. Beta toxins modify sodium channel function in two ways: an excitatory effect (shifting the activation process to more negative potential) and/or a depressant effect (reducing the peak current). At concentration of 500 nM this toxin produces channel opening at more negative potentials in hNav1.2/SCN2A and hNav1.3/SCN3A, which shows the biggest effect. On the other hand the peak current is decreased in hNav1.4/SCN4A and hNav1.5/SCN5A channels, without apparent modification of the activation gate. This toxin is active against mammals. The protein is Beta-mammal Tt1g of Tityus trivittatus (Argentinean scorpion).